Here is a 274-residue protein sequence, read N- to C-terminus: Dermonecrotic toxin SdSicTox-betaIIB1bvii (274 aa).

Residue histidine 5 is part of the active site. Mg(2+)-binding residues include glutamate 25 and aspartate 27. Catalysis depends on histidine 41, which acts as the Nucleophile. Intrachain disulfides connect cysteine 45–cysteine 51 and cysteine 47–cysteine 190. Mg(2+) is bound at residue aspartate 85.

Belongs to the arthropod phospholipase D family. Class II subfamily. Requires Mg(2+) as cofactor. Expressed by the venom gland.

The protein resides in the secreted. The catalysed reaction is an N-(acyl)-sphingosylphosphocholine = an N-(acyl)-sphingosyl-1,3-cyclic phosphate + choline. It catalyses the reaction an N-(acyl)-sphingosylphosphoethanolamine = an N-(acyl)-sphingosyl-1,3-cyclic phosphate + ethanolamine. The enzyme catalyses a 1-acyl-sn-glycero-3-phosphocholine = a 1-acyl-sn-glycero-2,3-cyclic phosphate + choline. It carries out the reaction a 1-acyl-sn-glycero-3-phosphoethanolamine = a 1-acyl-sn-glycero-2,3-cyclic phosphate + ethanolamine. Functionally, dermonecrotic toxins cleave the phosphodiester linkage between the phosphate and headgroup of certain phospholipids (sphingolipid and lysolipid substrates), forming an alcohol (often choline) and a cyclic phosphate. This toxin acts on sphingomyelin (SM). It may also act on ceramide phosphoethanolamine (CPE), lysophosphatidylcholine (LPC) and lysophosphatidylethanolamine (LPE), but not on lysophosphatidylserine (LPS), and lysophosphatidylglycerol (LPG). It acts by transphosphatidylation, releasing exclusively cyclic phosphate products as second products. Induces dermonecrosis, hemolysis, increased vascular permeability, edema, inflammatory response, and platelet aggregation. The protein is Dermonecrotic toxin SdSicTox-betaIIB1bvii of Sicarius cf. damarensis (strain GJB-2008) (Six-eyed sand spider).